The following is a 78-amino-acid chain: Probable [Fe-S]-dependent transcriptional repressor (78 aa).

Iron-sulfur cluster-binding residues include Cys56, Cys61, Cys64, and Cys70.

The protein belongs to the FeoC family.

May function as a transcriptional regulator that controls feoABC expression. The polypeptide is Probable [Fe-S]-dependent transcriptional repressor (Escherichia coli O17:K52:H18 (strain UMN026 / ExPEC)).